We begin with the raw amino-acid sequence, 177 residues long: 3-hydroxydecanoyl-[acyl-carrier-protein] dehydratase (177 aa).

Residue histidine 76 is part of the active site.

It belongs to the thioester dehydratase family. FabA subfamily. As to quaternary structure, homodimer.

The protein resides in the cytoplasm. The enzyme catalyses a (3R)-hydroxyacyl-[ACP] = a (2E)-enoyl-[ACP] + H2O. It catalyses the reaction (3R)-hydroxydecanoyl-[ACP] = (2E)-decenoyl-[ACP] + H2O. It carries out the reaction (2E)-decenoyl-[ACP] = (3Z)-decenoyl-[ACP]. Its pathway is lipid metabolism; fatty acid biosynthesis. In terms of biological role, necessary for the introduction of cis unsaturation into fatty acids. Catalyzes the dehydration of (3R)-3-hydroxydecanoyl-ACP to E-(2)-decenoyl-ACP and then its isomerization to Z-(3)-decenoyl-ACP. Can catalyze the dehydratase reaction for beta-hydroxyacyl-ACPs with saturated chain lengths up to 16:0, being most active on intermediate chain length. The protein is 3-hydroxydecanoyl-[acyl-carrier-protein] dehydratase of Haemophilus influenzae (strain PittGG).